We begin with the raw amino-acid sequence, 106 residues long: Large ribosomal subunit protein uL24 (106 aa).

This sequence belongs to the universal ribosomal protein uL24 family. In terms of assembly, part of the 50S ribosomal subunit.

Its function is as follows. One of two assembly initiator proteins, it binds directly to the 5'-end of the 23S rRNA, where it nucleates assembly of the 50S subunit. One of the proteins that surrounds the polypeptide exit tunnel on the outside of the subunit. This is Large ribosomal subunit protein uL24 from Marinobacter nauticus (strain ATCC 700491 / DSM 11845 / VT8) (Marinobacter aquaeolei).